The chain runs to 220 residues: Peritrophin-55 (220 aa).

An N-terminal signal peptide occupies residues 1 to 19 (MKSVFVCTLVLALAHHAFA). N-linked (GlcNAc...) asparagine glycosylation is present at asparagine 29. Residues 33 to 95 (ITPCLGNDII…NFIPAPTCEY (63 aa)) enclose the Chitin-binding type-2 domain. Cysteine 68 and cysteine 84 are oxidised to a cystine. Over residues 116–165 (TTLKTTPSKTTPIVTTAPPSTPVPSTIVTNKPDPTTPKTTKPPKVTTTVN) the composition is skewed to low complexity. Residues 116–220 (TTLKTTPSKT…TPPSIVQLQN (105 aa)) form a disordered region. Residues 197 to 210 (PTPPGMPPTPPSFG) show a composition bias toward pro residues.

Post-translationally, glycosylated. As to expression, larval peritrophic membrane.

May bind oligosaccharide structures. The protein is Peritrophin-55 of Lucilia cuprina (Green bottle fly).